The chain runs to 1164 residues: DNA-directed RNA polymerase subunit beta (1164 aa).

Disordered regions lie at residues 975 to 994 (RSSL…GKSN) and 1143 to 1164 (ANAA…MDVS). Composition is skewed to basic and acidic residues over residues 981–991 (RDGERQVDDFG) and 1152–1164 (SRDE…MDVS).

This sequence belongs to the RNA polymerase beta chain family. The RNAP catalytic core consists of 2 alpha, 1 beta, 1 beta' and 1 omega subunit. When a sigma factor is associated with the core the holoenzyme is formed, which can initiate transcription.

It catalyses the reaction RNA(n) + a ribonucleoside 5'-triphosphate = RNA(n+1) + diphosphate. DNA-dependent RNA polymerase catalyzes the transcription of DNA into RNA using the four ribonucleoside triphosphates as substrates. This Corynebacterium jeikeium (strain K411) protein is DNA-directed RNA polymerase subunit beta.